The primary structure comprises 393 residues: NAD(P)H-quinone oxidoreductase subunit H, chloroplastic (393 aa).

Belongs to the complex I 49 kDa subunit family. As to quaternary structure, NDH is composed of at least 16 different subunits, 5 of which are encoded in the nucleus.

It localises to the plastid. The protein resides in the chloroplast thylakoid membrane. The enzyme catalyses a plastoquinone + NADH + (n+1) H(+)(in) = a plastoquinol + NAD(+) + n H(+)(out). It carries out the reaction a plastoquinone + NADPH + (n+1) H(+)(in) = a plastoquinol + NADP(+) + n H(+)(out). Its function is as follows. NDH shuttles electrons from NAD(P)H:plastoquinone, via FMN and iron-sulfur (Fe-S) centers, to quinones in the photosynthetic chain and possibly in a chloroplast respiratory chain. The immediate electron acceptor for the enzyme in this species is believed to be plastoquinone. Couples the redox reaction to proton translocation, and thus conserves the redox energy in a proton gradient. This chain is NAD(P)H-quinone oxidoreductase subunit H, chloroplastic, found in Solanum bulbocastanum (Wild potato).